A 142-amino-acid polypeptide reads, in one-letter code: Sec-independent protein translocase protein TatB (142 aa).

The chain crosses the membrane as a helical span at residues 1 to 21 (MFDFGFSELVVIGVVMLIVVG). A disordered region spans residues 99–142 (AAPPDNTTSAESQAAADPAAVDSSQQLELRLDTTPKQVVGSDKA). Low complexity predominate over residues 107-124 (SAESQAAADPAAVDSSQQ).

Belongs to the TatB family. As to quaternary structure, the Tat system comprises two distinct complexes: a TatABC complex, containing multiple copies of TatA, TatB and TatC subunits, and a separate TatA complex, containing only TatA subunits. Substrates initially bind to the TatABC complex, which probably triggers association of the separate TatA complex to form the active translocon.

The protein localises to the cell inner membrane. In terms of biological role, part of the twin-arginine translocation (Tat) system that transports large folded proteins containing a characteristic twin-arginine motif in their signal peptide across membranes. Together with TatC, TatB is part of a receptor directly interacting with Tat signal peptides. TatB may form an oligomeric binding site that transiently accommodates folded Tat precursor proteins before their translocation. This is Sec-independent protein translocase protein TatB from Azoarcus sp. (strain BH72).